A 353-amino-acid polypeptide reads, in one-letter code: Nicotinate-nucleotide--dimethylbenzimidazole phosphoribosyltransferase (353 aa).

Glutamate 318 acts as the Proton acceptor in catalysis.

It belongs to the CobT family.

It carries out the reaction 5,6-dimethylbenzimidazole + nicotinate beta-D-ribonucleotide = alpha-ribazole 5'-phosphate + nicotinate + H(+). Its pathway is nucleoside biosynthesis; alpha-ribazole biosynthesis; alpha-ribazole from 5,6-dimethylbenzimidazole: step 1/2. Functionally, catalyzes the synthesis of alpha-ribazole-5'-phosphate from nicotinate mononucleotide (NAMN) and 5,6-dimethylbenzimidazole (DMB). This Geobacter metallireducens (strain ATCC 53774 / DSM 7210 / GS-15) protein is Nicotinate-nucleotide--dimethylbenzimidazole phosphoribosyltransferase.